A 342-amino-acid polypeptide reads, in one-letter code: Ribosomal RNA small subunit methyltransferase C (342 aa).

The protein belongs to the methyltransferase superfamily. RsmC family. As to quaternary structure, monomer.

The protein resides in the cytoplasm. It carries out the reaction guanosine(1207) in 16S rRNA + S-adenosyl-L-methionine = N(2)-methylguanosine(1207) in 16S rRNA + S-adenosyl-L-homocysteine + H(+). Functionally, specifically methylates the guanine in position 1207 of 16S rRNA in the 30S particle. The polypeptide is Ribosomal RNA small subunit methyltransferase C (Cronobacter sakazakii (strain ATCC BAA-894) (Enterobacter sakazakii)).